The following is a 454-amino-acid chain: Kynurenine--oxoglutarate transaminase 3 (454 aa).

Phenylalanine 2 is subject to N-acetylserine. Glycine 71 provides a ligand contact to substrate. Lysine 116 bears the N6-acetyllysine; alternate mark. Lysine 116 carries the N6-succinyllysine; alternate modification. Residue asparagine 218 coordinates substrate. Lysine 280 bears the N6-(pyridoxal phosphate)lysine mark. Residue arginine 429 coordinates substrate.

Belongs to the class-I pyridoxal-phosphate-dependent aminotransferase family. As to quaternary structure, homodimer. The cofactor is pyridoxal 5'-phosphate.

The catalysed reaction is L-kynurenine + 2-oxoglutarate = kynurenate + L-glutamate + H2O. It carries out the reaction L-kynurenine + glyoxylate = kynurenate + glycine + H2O. The enzyme catalyses 3-hydroxy-L-kynurenine + glyoxylate = xanthurenate + glycine + H2O. It catalyses the reaction an S-substituted L-cysteine + H2O = a thiol + pyruvate + NH4(+). Its pathway is amino-acid degradation; L-kynurenine degradation; kynurenate from L-kynurenine: step 1/2. Its function is as follows. Catalyzes the irreversible transamination of the L-tryptophan metabolite L-kynurenine to form kynurenic acid (KA), an intermediate in the tryptophan catabolic pathway which is also a broad spectrum antagonist of the three ionotropic excitatory amino acid receptors among others. May catalyze the beta-elimination of S-conjugates and Se-conjugates of L-(seleno)cysteine, resulting in the cleavage of the C-S or C-Se bond. Has transaminase activity towards L-kynurenine, tryptophan, phenylalanine, serine, cysteine, methionine, histidine, glutamine and asparagine with glyoxylate as an amino group acceptor (in vitro). Has lower activity with 2-oxoglutarate as amino group acceptor (in vitro). In Homo sapiens (Human), this protein is Kynurenine--oxoglutarate transaminase 3.